We begin with the raw amino-acid sequence, 461 residues long: Peptidyl-prolyl cis-trans isomerase-like 4 (461 aa).

One can recognise a PPIase cyclophilin-type domain in the interval 1–171 (MSVLLETSLG…KDIRIRHTVI (171 aa)). A coiled-coil region spans residues 205 to 234 (EELDDNMDEESMEKLRREREARAQALTLEM). The 79-residue stretch at 248 to 326 (NVLFVCKLNP…HRIHVDFSQS (79 aa)) folds into the RRM domain. The segment at 341-461 (KRSGQRGGFG…DERYRERRRR (121 aa)) is disordered. 2 stretches are compositionally biased toward basic and acidic residues: residues 365-384 (DNAREKENDYTLVFDKGDKA) and 398-461 (SNRD…RRRR).

The protein belongs to the cyclophilin-type PPIase family. PPIL4 subfamily.

It localises to the nucleus. It carries out the reaction [protein]-peptidylproline (omega=180) = [protein]-peptidylproline (omega=0). In terms of biological role, PPIases accelerate the folding of proteins. It catalyzes the cis-trans isomerization of proline imidic peptide bonds in oligopeptides. The polypeptide is Peptidyl-prolyl cis-trans isomerase-like 4 (cyp6) (Aspergillus oryzae (strain ATCC 42149 / RIB 40) (Yellow koji mold)).